Here is a 333-residue protein sequence, read N- to C-terminus: Procathepsin L (333 aa).

Residues 1–17 form the signal peptide; the sequence is MNPTLILAAFCLGIASA. The propeptide at 18–113 is activation peptide; that stretch reads TLTFDHSLEA…KVFQEPLFYE (96 aa). Zn(2+) is bound at residue E122. Cystine bridges form between C135-C178 and C169-C211. Residue C138 is part of the active site. 5 residues coordinate Zn(2+): E163, D184, E199, E205, and E209. N-linked (GlcNAc...) asparagine glycosylation is present at N221. 5 residues coordinate Zn(2+): D227, D250, H253, D273, and D275. Residues C269 and C322 are joined by a disulfide bond. H276 is a catalytic residue. Positions 289–291 are excised as a propeptide; it reads ESD. The active site involves N300.

This sequence belongs to the peptidase C1 family. In terms of assembly, dimer of a heavy and a light chain linked by disulfide bonds. Interacts with Long isoform of CD74/Ii chain; the interaction stabilizes the conformation of mature CTSL. Post-translationally, during export along the endocytic pathway, pro-CTSL undergoes several proteolytic cleavages to generate the CTSL single-chain and two-chain mature forms, composed of a heavy chain linked to a light chain by disulfide bonds. Autocleavage; produces the single-chain CTSL after cleavage of the propeptide. The cleavage can be intermolecular.

The protein resides in the lysosome. Its subcellular location is the apical cell membrane. It is found in the cytoplasmic vesicle. It localises to the secretory vesicle. The protein localises to the chromaffin granule. The protein resides in the secreted. Its subcellular location is the extracellular space. It is found in the nucleus. It carries out the reaction Specificity close to that of papain. As compared to cathepsin B, cathepsin L exhibits higher activity toward protein substrates, but has little activity on Z-Arg-Arg-NHMec, and no peptidyl-dipeptidase activity.. Inhibited by the propeptide produced by autocleavage. Long isoform of CD74/Ii chain stabilizes the conformation of mature CTSL by binding to its active site and serving as a chaperone to help maintain a pool of mature enzyme in endocytic compartments and extracellular space of APCs. IFNG enhances the conversion into the CTSL mature and active form. Inhibited by CST6. Inhibited by the glycopeptide antibiotic teicoplanin. Inhibited by amantadine. In terms of biological role, thiol protease important for the overall degradation of proteins in lysosomes. Plays a critical for normal cellular functions such as general protein turnover, antigen processing and bone remodeling. Involved in the solubilization of cross-linked TG/thyroglobulin and in the subsequent release of thyroid hormone thyroxine (T4) by limited proteolysis of TG/thyroglobulin in the thyroid follicle lumen. In neuroendocrine chromaffin cells secretory vesicles, catalyzes the prohormone proenkephalin processing to the active enkephalin peptide neurotransmitter. In thymus, regulates CD4(+) T cell positive selection by generating the major histocompatibility complex class II (MHCII) bound peptide ligands presented by cortical thymic epithelial cells. Also mediates invariant chain processing in cortical thymic epithelial cells. Major elastin-degrading enzyme at neutral pH. Accumulates as a mature and active enzyme in the extracellular space of antigen presenting cells (APCs) to regulate degradation of the extracellular matrix in the course of inflammation. Secreted form generates endostatin from COL18A1. Critical for cardiac morphology and function. Plays an important role in hair follicle morphogenesis and cycling, as well as epidermal differentiation. Required for maximal stimulation of steroidogenesis by TIMP1. (Microbial infection) In cells lacking TMPRSS2 expression, facilitates human coronaviruses SARS-CoV and SARS-CoV-2 infections via a slow acid-activated route with the proteolysis of coronavirus spike (S) glycoproteins in lysosome for entry into host cell. Proteolysis within lysosomes is sufficient to activate membrane fusion by coronaviruses SARS-CoV and EMC (HCoV-EMC) S as well as Zaire ebolavirus glycoproteins. Its function is as follows. Functions in the regulation of cell cycle progression through proteolytic processing of the CUX1 transcription factor. Translation initiation at downstream start sites allows the synthesis of isoforms that are devoid of a signal peptide and localize to the nucleus where they cleave the CUX1 transcription factor and modify its DNA binding properties. The chain is Procathepsin L from Homo sapiens (Human).